The chain runs to 426 residues: MESLTLQPISKIDGQINLPGSKSVSNRALLLAALASGTTKLTNLLDSDDIRHMLNALKALGVEYKLSADKTECEVTGLGRAFEPNEALELFLGNAGTAMRPLAAALCLGQGEFVLTGEPRMKERPIGHLVTALKAAGADVEYLENENYPPLKIKGTGLHGGTVEIDGSISSQFLTAFLMAAPLSTQETTIKIVGDLVSKPYIDITLDIMATFGVKIENQNYQTFVVPANQTYVAPGDFLVEGDASSASYFLAAAAIKGGEVKVTGIGKKSIQGDVQFADALAAMGTEIEWGDDYVIARKGELNAIDMDFNHIPDAAMTIATAALFAKGTTSIRNVYNWRVKETDRLAAMATELRKVGAVVEEGEDYITITPPASLQHASIDTYDDHRMAMCFSLVALSDTPVTINDPGCTSKTFPDYFDKLKELSC.

3 residues coordinate 3-phosphoshikimate: lysine 22, serine 23, and arginine 27. Lysine 22 serves as a coordination point for phosphoenolpyruvate. Phosphoenolpyruvate contacts are provided by glycine 96 and arginine 124. The 3-phosphoshikimate site is built by serine 170, serine 171, glutamine 172, serine 198, aspartate 314, asparagine 337, and lysine 341. Glutamine 172 lines the phosphoenolpyruvate pocket. Aspartate 314 acts as the Proton acceptor in catalysis. Residues arginine 345, arginine 387, and lysine 412 each contribute to the phosphoenolpyruvate site.

This sequence belongs to the EPSP synthase family. In terms of assembly, monomer.

Its subcellular location is the cytoplasm. It catalyses the reaction 3-phosphoshikimate + phosphoenolpyruvate = 5-O-(1-carboxyvinyl)-3-phosphoshikimate + phosphate. It functions in the pathway metabolic intermediate biosynthesis; chorismate biosynthesis; chorismate from D-erythrose 4-phosphate and phosphoenolpyruvate: step 6/7. Its function is as follows. Catalyzes the transfer of the enolpyruvyl moiety of phosphoenolpyruvate (PEP) to the 5-hydroxyl of shikimate-3-phosphate (S3P) to produce enolpyruvyl shikimate-3-phosphate and inorganic phosphate. The sequence is that of 3-phosphoshikimate 1-carboxyvinyltransferase from Aliivibrio fischeri (strain MJ11) (Vibrio fischeri).